The following is a 75-amino-acid chain: Small ribosomal subunit protein bS18 (75 aa).

Belongs to the bacterial ribosomal protein bS18 family. In terms of assembly, part of the 30S ribosomal subunit. Forms a tight heterodimer with protein bS6.

Its function is as follows. Binds as a heterodimer with protein bS6 to the central domain of the 16S rRNA, where it helps stabilize the platform of the 30S subunit. This Mycoplasma capricolum subsp. capricolum (strain California kid / ATCC 27343 / NCTC 10154) protein is Small ribosomal subunit protein bS18.